The following is a 402-amino-acid chain: Zinc finger CCHC domain-containing protein 12 (402 aa).

Residues 268 to 277 are compositionally biased toward acidic residues; it reads DTPDDSDEDV. The interval 268-342 is disordered; it reads DTPDDSDEDV…PGNMRRTRKR (75 aa). The segment covering 311-323 has biased composition (polar residues); it reads SPNNSQFPSPCTS. The CCHC-type zinc-finger motif lies at 346 to 363; that stretch reads IRCSYCGEEGHSKETCDN. The segment covering 383-392 has biased composition (basic and acidic residues); that stretch reads HTEERSREAP. The disordered stretch occupies residues 383 to 402; the sequence is HTEERSREAPVEPSDPCELQ.

The protein belongs to the ZCCHC12 family. Interacts with SMAD1 and CREB-binding protein (CBP). Forms a protein-DNA complex through its association with SMAD1.

Transcriptional coactivator in the bone morphogenetic protein (BMP)-signaling pathway. It positively modulates BMP signaling by interacting with SMAD1 and associating with CBP in the transcription complex. It contributes to the BMP-induced enhancement of cholinergic-neuron-specific gene expression. The protein is Zinc finger CCHC domain-containing protein 12 (ZCCHC12) of Bos taurus (Bovine).